The sequence spans 335 residues: Holliday junction branch migration complex subunit RuvB (335 aa).

The interval 1–181 (MDRIVEIEKY…FGMQFRLEFY (181 aa)) is large ATPase domain (RuvB-L). ATP contacts are provided by residues Leu-20, Arg-21, Gly-62, Lys-65, Thr-66, Thr-67, 128–130 (EDY), Arg-171, Tyr-181, and Arg-218. Residue Thr-66 participates in Mg(2+) binding. Residues 182 to 252 (KDSELALILQ…RANEALNSLG (71 aa)) form a small ATPAse domain (RuvB-S) region. The head domain (RuvB-H) stretch occupies residues 255-335 (ELGFDAMDLR…LNYEKTLFEE (81 aa)). Residues Arg-309 and Arg-314 each contribute to the DNA site.

Belongs to the RuvB family. Homohexamer. Forms an RuvA(8)-RuvB(12)-Holliday junction (HJ) complex. HJ DNA is sandwiched between 2 RuvA tetramers; dsDNA enters through RuvA and exits via RuvB. An RuvB hexamer assembles on each DNA strand where it exits the tetramer. Each RuvB hexamer is contacted by two RuvA subunits (via domain III) on 2 adjacent RuvB subunits; this complex drives branch migration. In the full resolvosome a probable DNA-RuvA(4)-RuvB(12)-RuvC(2) complex forms which resolves the HJ.

Its subcellular location is the cytoplasm. It carries out the reaction ATP + H2O = ADP + phosphate + H(+). Its function is as follows. The RuvA-RuvB-RuvC complex processes Holliday junction (HJ) DNA during genetic recombination and DNA repair, while the RuvA-RuvB complex plays an important role in the rescue of blocked DNA replication forks via replication fork reversal (RFR). RuvA specifically binds to HJ cruciform DNA, conferring on it an open structure. The RuvB hexamer acts as an ATP-dependent pump, pulling dsDNA into and through the RuvAB complex. RuvB forms 2 homohexamers on either side of HJ DNA bound by 1 or 2 RuvA tetramers; 4 subunits per hexamer contact DNA at a time. Coordinated motions by a converter formed by DNA-disengaged RuvB subunits stimulates ATP hydrolysis and nucleotide exchange. Immobilization of the converter enables RuvB to convert the ATP-contained energy into a lever motion, pulling 2 nucleotides of DNA out of the RuvA tetramer per ATP hydrolyzed, thus driving DNA branch migration. The RuvB motors rotate together with the DNA substrate, which together with the progressing nucleotide cycle form the mechanistic basis for DNA recombination by continuous HJ branch migration. Branch migration allows RuvC to scan DNA until it finds its consensus sequence, where it cleaves and resolves cruciform DNA. This Campylobacter jejuni (strain RM1221) protein is Holliday junction branch migration complex subunit RuvB.